A 641-amino-acid polypeptide reads, in one-letter code: Threonine--tRNA ligase (641 aa).

Positions 1-61 constitute a TGS domain; that stretch reads MPAITLPDGS…DDDVQLEIVT (61 aa). Residues 242-533 are catalytic; sequence DHRRIGRAQN…LIEHYAGALP (292 aa). Positions 333, 384, and 510 each coordinate Zn(2+).

The protein belongs to the class-II aminoacyl-tRNA synthetase family. In terms of assembly, homodimer. Requires Zn(2+) as cofactor.

The protein localises to the cytoplasm. It carries out the reaction tRNA(Thr) + L-threonine + ATP = L-threonyl-tRNA(Thr) + AMP + diphosphate + H(+). Functionally, catalyzes the attachment of threonine to tRNA(Thr) in a two-step reaction: L-threonine is first activated by ATP to form Thr-AMP and then transferred to the acceptor end of tRNA(Thr). Also edits incorrectly charged L-seryl-tRNA(Thr). In Alkalilimnicola ehrlichii (strain ATCC BAA-1101 / DSM 17681 / MLHE-1), this protein is Threonine--tRNA ligase.